The sequence spans 152 residues: Leptin (152 aa).

A signal peptide spans 1-26; it reads MDHILALVLALLPLSLCVALPGALDA. Cys-109 and Cys-152 form a disulfide bridge.

It belongs to the leptin family. As to expression, expressed mostly in the liver.

It localises to the secreted. Functionally, may function as part of a signaling pathway that acts to regulate the size of the body fat depot. In Takifugu rubripes (Japanese pufferfish), this protein is Leptin (lep).